A 433-amino-acid polypeptide reads, in one-letter code: MNYTTQMDAARKGIITKEMEIVSQKEQVDVNELRELIANGQVVIPANKNHKSLSAEGVGKNLRTKINVNLGISRDCKDIEKELEKVRVAIDMKAEAIMDLSNYGKTREFREKVVEMSPAMIGSVPMYDAVGYLEKELKDITEEEFLNVIRQHAIDGVDFITIHAGLTRSVCQKIKNHERLTHIVSRGGSLLFAWMELNNKENPIYTNFDKILDICEEYDVTLSLGDACRPGCIKDSTDGVQIQELVVLGELTKRAWERNVQVMIEGPGHMAIDEIEANVVLEKRLCHGAPFYVLGPLVTDIAPGYDHITSAIGGALACAKGVDFLCYVTPAEHLRLPNLDDMKEGIIAAKIAAHAGDIAKNVKGAREWDNKMSKARADLDWCEMFRLAIDPEKAKRYRDESTPTHEDSCTMCGKMCSMRTVKKILNNEELNLI.

Residues asparagine 69, methionine 98, tyrosine 127, histidine 163, 185–187 (SRG), 226–229 (DACR), and glutamate 265 each bind substrate. Histidine 269 serves as a coordination point for Zn(2+). A substrate-binding site is contributed by tyrosine 292. Residue histidine 333 participates in Zn(2+) binding. [4Fe-4S] cluster-binding residues include cysteine 409, cysteine 412, and cysteine 416.

It belongs to the ThiC family. Requires [4Fe-4S] cluster as cofactor.

It carries out the reaction 5-amino-1-(5-phospho-beta-D-ribosyl)imidazole + S-adenosyl-L-methionine = 4-amino-2-methyl-5-(phosphooxymethyl)pyrimidine + CO + 5'-deoxyadenosine + formate + L-methionine + 3 H(+). It functions in the pathway cofactor biosynthesis; thiamine diphosphate biosynthesis. In terms of biological role, catalyzes the synthesis of the hydroxymethylpyrimidine phosphate (HMP-P) moiety of thiamine from aminoimidazole ribotide (AIR) in a radical S-adenosyl-L-methionine (SAM)-dependent reaction. This chain is Phosphomethylpyrimidine synthase, found in Clostridioides difficile (strain 630) (Peptoclostridium difficile).